The primary structure comprises 147 residues: Large ribosomal subunit protein bL9 (147 aa).

Belongs to the bacterial ribosomal protein bL9 family.

Binds to the 23S rRNA. The chain is Large ribosomal subunit protein bL9 from Clostridium botulinum (strain ATCC 19397 / Type A).